Here is a 269-residue protein sequence, read N- to C-terminus: Malonyl-[acyl-carrier protein] O-methyltransferase (269 aa).

Belongs to the methyltransferase superfamily.

The catalysed reaction is malonyl-[ACP] + S-adenosyl-L-methionine = malonyl-[ACP] methyl ester + S-adenosyl-L-homocysteine. It participates in cofactor biosynthesis; biotin biosynthesis. Converts the free carboxyl group of a malonyl-thioester to its methyl ester by transfer of a methyl group from S-adenosyl-L-methionine (SAM). It allows to synthesize pimeloyl-ACP via the fatty acid synthetic pathway. The polypeptide is Malonyl-[acyl-carrier protein] O-methyltransferase (Bacillus anthracis).